A 553-amino-acid chain; its full sequence is Formate--tetrahydrofolate ligase (553 aa).

63–70 (TPAGEGKS) serves as a coordination point for ATP.

Belongs to the formate--tetrahydrofolate ligase family.

The catalysed reaction is (6S)-5,6,7,8-tetrahydrofolate + formate + ATP = (6R)-10-formyltetrahydrofolate + ADP + phosphate. Its pathway is one-carbon metabolism; tetrahydrofolate interconversion. The sequence is that of Formate--tetrahydrofolate ligase from Limosilactobacillus fermentum (strain NBRC 3956 / LMG 18251) (Lactobacillus fermentum).